Here is a 177-residue protein sequence, read N- to C-terminus: Large ribosomal subunit protein uL6 (177 aa).

Belongs to the universal ribosomal protein uL6 family. Part of the 50S ribosomal subunit.

This protein binds to the 23S rRNA, and is important in its secondary structure. It is located near the subunit interface in the base of the L7/L12 stalk, and near the tRNA binding site of the peptidyltransferase center. The polypeptide is Large ribosomal subunit protein uL6 (Acidovorax ebreus (strain TPSY) (Diaphorobacter sp. (strain TPSY))).